Consider the following 287-residue polypeptide: Large ribosomal subunit protein uL2 (287 aa).

Residues 221 to 287 are disordered; the sequence is RGSVMNPCDH…SKRSRGGRDS (67 aa). The segment covering 258-287 has biased composition (basic residues); it reads KTRKKNKPSNKLVVRRRRRISKRSRGGRDS.

It belongs to the universal ribosomal protein uL2 family. Part of the 50S ribosomal subunit. Forms a bridge to the 30S subunit in the 70S ribosome.

One of the primary rRNA binding proteins. Required for association of the 30S and 50S subunits to form the 70S ribosome, for tRNA binding and peptide bond formation. It has been suggested to have peptidyltransferase activity; this is somewhat controversial. Makes several contacts with the 16S rRNA in the 70S ribosome. The sequence is that of Large ribosomal subunit protein uL2 from Prochlorococcus marinus (strain MIT 9301).